The following is a 321-amino-acid chain: Corticotropin-releasing factor-binding protein (321 aa).

An N-terminal signal peptide occupies residues 1-21 (MTPASRPDWCLILLFLAVLRG). Cystine bridges form between Cys59-Cys80, Cys103-Cys140, Cys182-Cys204, Cys237-Cys264, and Cys277-Cys317. N-linked (GlcNAc...) asparagine glycosylation occurs at Asn203.

Belongs to the CRF-binding protein family.

The protein resides in the secreted. Functionally, binds CRF and inactivates it. May prevent inappropriate pituitary-adrenal stimulation in pregnancy. The chain is Corticotropin-releasing factor-binding protein (crhbp) from Xenopus laevis (African clawed frog).